A 436-amino-acid chain; its full sequence is Cholecystokinin receptor type A (436 aa).

At 1 to 41 the chain is on the extracellular side; it reads MDVVDSLLMNGSNITPPCELGLENETLFCLDQPQPSKEWQS. N10 and N24 each carry an N-linked (GlcNAc...) asparagine glycan. An intrachain disulfide couples C18 to C29. The helical transmembrane segment at 42-67 threads the bilayer; it reads AVQILLYSFIFLLSVLGNTLVITVLI. Residues 68–77 are Cytoplasmic-facing; that stretch reads RNKRMRTVTN. A helical transmembrane segment spans residues 78–104; that stretch reads IFLLSLAVSDLMLCLFCMPFNLIPNLL. The Extracellular portion of the chain corresponds to 105–115; it reads KDFIFGSAVCK. C114 and C196 are disulfide-bonded. A helical membrane pass occupies residues 116-137; sequence TTTYFMGTSVSVSTFNLVAISL. Over 138–157 the chain is Cytoplasmic; it reads ERYGAICRPLQSRVWQTKSH. The helical transmembrane segment at 158-178 threads the bilayer; sequence ALKVIAATWCLSFTIMTPYPI. The Extracellular portion of the chain corresponds to 179-210; it reads YSNLVPFTKNNNQTANMCRFLLPSDAMQQSWQ. N190 carries an N-linked (GlcNAc...) asparagine glycan. A helical transmembrane segment spans residues 211-234; that stretch reads TFLLLILFLIPGVVMVVAYGLISL. Over 235–321 the chain is Cytoplasmic; sequence ELYQGIKFDA…NLIAKKRVIR (87 aa). Positions 252-280 are disordered; that stretch reads EKRLSSGGGGGGGSSSSRYEDSDGCYLQK. A helical transmembrane segment spans residues 322–342; sequence MLIVIVVLFFLCWMPIFSANA. At 343–357 the chain is on the extracellular side; the sequence is WRAYDTVSAEKHLSG. A helical membrane pass occupies residues 358–381; sequence TPISFILLLSYTSSCVNPIIYCFM. Over 382 to 436 the chain is Cytoplasmic; the sequence is NKRFRLGFMATFPCCPNPGPTGVRGEVGEEEDGRTIRASLSRYSYSHMSTSAPPH. The S-palmitoyl cysteine moiety is linked to residue C395.

The protein belongs to the G-protein coupled receptor 1 family.

The protein localises to the cell membrane. Functionally, receptor for cholecystokinin. Mediates pancreatic growth and enzyme secretion, smooth muscle contraction of the gall bladder and stomach. Has a 1000-fold higher affinity for CCK rather than for gastrin. It modulates feeding and dopamine-induced behavior in the central and peripheral nervous system. This receptor mediates its action by association with G proteins that activate a phosphatidylinositol-calcium second messenger system. The chain is Cholecystokinin receptor type A (Cckar) from Mus musculus (Mouse).